The sequence spans 210 residues: Cell division protein SepF (210 aa).

2 disordered regions span residues 22-72 and 79-98; these read DYYE…FDDA and RGPREFDRTPPRFGGLRGST. 2 stretches are compositionally biased toward basic and acidic residues: residues 37 to 60 and 79 to 88; these read RPREDRFEDEAYPRGYDDRAREYD and RGPREFDRTP.

Belongs to the SepF family. Homodimer. Interacts with FtsZ.

It is found in the cytoplasm. Its function is as follows. Cell division protein that is part of the divisome complex and is recruited early to the Z-ring. Probably stimulates Z-ring formation, perhaps through the cross-linking of FtsZ protofilaments. Its function overlaps with FtsA. The chain is Cell division protein SepF from Mycolicibacterium vanbaalenii (strain DSM 7251 / JCM 13017 / BCRC 16820 / KCTC 9966 / NRRL B-24157 / PYR-1) (Mycobacterium vanbaalenii).